We begin with the raw amino-acid sequence, 1192 residues long: Protein argonaute 13 (1192 aa).

The PAZ domain occupies 183 to 296 (TVIQFVEEFL…LPMEVCKIVE (114 aa)). Residues 472–770 (LLIVILLEVS…AASHAHCCIK (299 aa)) form the Piwi domain.

Belongs to the argonaute family. Ago subfamily.

Its function is as follows. Probably involved in the RNA silencing pathway. May bind to short RNAs such as microRNAs (miRNAs) or short interfering RNAs (siRNAs), and represses the translation of mRNAs which are complementary to them. The chain is Protein argonaute 13 (AGO13) from Oryza sativa subsp. japonica (Rice).